A 528-amino-acid polypeptide reads, in one-letter code: Na(+)/H(+) antiporter NhaB (528 aa).

A run of 10 helical transmembrane segments spans residues 11–31, 67–87, 98–118, 140–160, 240–260, 311–331, 350–370, 391–411, 449–469, and 476–496; these read VNFL…FLVI, PGGL…SQVL, LLLI…LFVF, AFLS…AVGI, FFIR…LTCV, LVAG…SVII, EEAL…GVII, LVVF…VFVG, ATPN…APLI, and MVIM…VTIE.

The protein belongs to the NhaB Na(+)/H(+) (TC 2.A.34) antiporter family.

It is found in the cell inner membrane. The catalysed reaction is 2 Na(+)(in) + 3 H(+)(out) = 2 Na(+)(out) + 3 H(+)(in). Na(+)/H(+) antiporter that extrudes sodium in exchange for external protons. The polypeptide is Na(+)/H(+) antiporter NhaB (Shewanella denitrificans (strain OS217 / ATCC BAA-1090 / DSM 15013)).